Consider the following 263-residue polypeptide: Imidazole glycerol phosphate synthase subunit HisF (263 aa).

Residues Asp-11 and Asp-130 contribute to the active site.

It belongs to the HisA/HisF family. As to quaternary structure, heterodimer of HisH and HisF.

The protein localises to the cytoplasm. The enzyme catalyses 5-[(5-phospho-1-deoxy-D-ribulos-1-ylimino)methylamino]-1-(5-phospho-beta-D-ribosyl)imidazole-4-carboxamide + L-glutamine = D-erythro-1-(imidazol-4-yl)glycerol 3-phosphate + 5-amino-1-(5-phospho-beta-D-ribosyl)imidazole-4-carboxamide + L-glutamate + H(+). The protein operates within amino-acid biosynthesis; L-histidine biosynthesis; L-histidine from 5-phospho-alpha-D-ribose 1-diphosphate: step 5/9. Its function is as follows. IGPS catalyzes the conversion of PRFAR and glutamine to IGP, AICAR and glutamate. The HisF subunit catalyzes the cyclization activity that produces IGP and AICAR from PRFAR using the ammonia provided by the HisH subunit. This is Imidazole glycerol phosphate synthase subunit HisF from Herpetosiphon aurantiacus (strain ATCC 23779 / DSM 785 / 114-95).